The chain runs to 312 residues: Regulation of nuclear pre-mRNA domain-containing protein 1A (312 aa).

An N-acetylserine modification is found at Ser-2. The region spanning 2 to 133 (SAFSEAALEK…QLKQALYGDK (132 aa)) is the CID domain. Residues Ser-153, Ser-156, and Ser-285 each carry the phosphoserine modification. Residues 244–286 (LADFLRCQKEALAEKEHKLEEYKRKLARVSLVRKELRSRIQSL) adopt a coiled-coil conformation.

It belongs to the UPF0400 (RTT103) family. As to quaternary structure, may form a heterodimer with RPRD1B. Associates with the RNA polymerase II subunit POLR2A (via CTD phosphorylated at 'Ser-2' and 'Ser-7' of the heptad repeats).

The protein localises to the nucleus. Interacts with phosphorylated C-terminal heptapeptide repeat domain (CTD) of the largest RNA polymerase II subunit POLR2A, and participates in dephosphorylation of the CTD by RPAP2. May act as a negative regulator of cyclin-D1 (CCND1) and cyclin-E (CCNE1) in the cell cycle. This is Regulation of nuclear pre-mRNA domain-containing protein 1A (RPRD1A) from Pongo abelii (Sumatran orangutan).